The following is a 781-amino-acid chain: ATP-dependent RNA helicase rok1 (781 aa).

Disordered regions lie at residues 7-108 (LSRG…KPKL) and 134-177 (QDEA…IYPQ). Basic residues predominate over residues 48–57 (KRGKKRKRKG). Residues 66 to 75 (SGDEDDDASD) are compositionally biased toward acidic residues. Composition is skewed to basic and acidic residues over residues 84–108 (TPEELAAKKDAELKADEPKKQKPKL) and 139–173 (TEEKPPKKQKKQKEDRKKQEEEEKKKKKKDEDKKQ). The Q motif signature appears at 184 to 212 (ELKYTYGIHPVLADNITRQGFRVPTEVQM). The Helicase ATP-binding domain occupies 233–487 (DVKVEKGIDF…TKHIDKRAKR (255 aa)). 246–253 (APTGSGKT) provides a ligand contact to ATP. Residues 323-386 (ESNEQEETEQ…SRAKGDQKFK (64 aa)) form a disordered region. Positions 339-369 (QDSDSDSEAESEPEEVMKIDEEEEEEEESDS) are enriched in acidic residues. Basic and acidic residues predominate over residues 370-386 (DAEKKTESRAKGDQKFK). The DEAD box motif lies at 434 to 437 (DEAD). A Helicase C-terminal domain is found at 527 to 689 (ALRQLLHPVS…GKDIDEKDTV (163 aa)). The interval 718 to 781 (RGVESRRTGG…KAEEEWTGLD (64 aa)) is disordered. Residues 736-752 (SWERRRENNRREAIEAS) are compositionally biased toward basic and acidic residues.

This sequence belongs to the DEAD box helicase family. DDX52/ROK1 subfamily. Interacts with the U3 snoRNA and is associated with the 90S and 40S pre-ribosomes.

It is found in the nucleus. Its subcellular location is the nucleolus. The enzyme catalyses ATP + H2O = ADP + phosphate + H(+). In terms of biological role, ATP-dependent RNA helicase involved in 40S ribosomal subunit biogenesis. Required for the processing and cleavage of 35S pre-rRNA at sites A0, A1, and A2, leading to mature 18S rRNA. In Neurospora crassa (strain ATCC 24698 / 74-OR23-1A / CBS 708.71 / DSM 1257 / FGSC 987), this protein is ATP-dependent RNA helicase rok1 (drh-16).